A 657-amino-acid polypeptide reads, in one-letter code: Folic acid synthesis protein FOL1 (657 aa).

The segment at 1–116 is DHNA; the sequence is MDKIIIKDLL…WPGVQIERTL (116 aa). The tract at residues 149-274 is HPPK; the sequence is YLAFGSNLGD…FVLLPLSDIA (126 aa). The Pterin-binding domain occupies 333–641; it reads TFIMGILNVT…DIPEIRDAML (309 aa). The DHPS stretch occupies residues 335-657; sequence IMGILNVTPD…KPQRRYQIQK (323 aa). Asn340 serves as a coordination point for Mg(2+). (7,8-dihydropterin-6-yl)methyl diphosphate is bound by residues Thr380, Asp416, and Asn435. The interval 466 to 524 is disordered; that stretch reads LNNSNDSNSNSSINTNGEDNNNNNNNNNNNNNNNNNNNNNNNNNDDNDNDNRSKIKQKI. The span at 467 to 509 shows a compositional bias: low complexity; it reads NNSNDSNSNSSINTNGEDNNNNNNNNNNNNNNNNNNNNNNNNN. Over residues 514–524 the composition is skewed to basic and acidic residues; the sequence is NDNRSKIKQKI. Residues Asp547, Lys583, and 629-631 each bind (7,8-dihydropterin-6-yl)methyl diphosphate; that span reads RIH.

The protein in the N-terminal section; belongs to the DHNA family. In the central section; belongs to the HPPK family. It in the C-terminal section; belongs to the DHPS family. The cofactor is Mg(2+).

It carries out the reaction 7,8-dihydroneopterin = 6-hydroxymethyl-7,8-dihydropterin + glycolaldehyde. The catalysed reaction is 6-hydroxymethyl-7,8-dihydropterin + ATP = (7,8-dihydropterin-6-yl)methyl diphosphate + AMP + H(+). It catalyses the reaction (7,8-dihydropterin-6-yl)methyl diphosphate + 4-aminobenzoate = 7,8-dihydropteroate + diphosphate. It participates in cofactor biosynthesis; tetrahydrofolate biosynthesis; 2-amino-4-hydroxy-6-hydroxymethyl-7,8-dihydropteridine diphosphate from 7,8-dihydroneopterin triphosphate: step 3/4. Its pathway is cofactor biosynthesis; tetrahydrofolate biosynthesis; 2-amino-4-hydroxy-6-hydroxymethyl-7,8-dihydropteridine diphosphate from 7,8-dihydroneopterin triphosphate: step 4/4. The protein operates within cofactor biosynthesis; tetrahydrofolate biosynthesis; 7,8-dihydrofolate from 2-amino-4-hydroxy-6-hydroxymethyl-7,8-dihydropteridine diphosphate and 4-aminobenzoate: step 1/2. In terms of biological role, catalyzes three sequential steps of tetrahydrofolate biosynthesis. This is Folic acid synthesis protein FOL1 (fol1) from Dictyostelium discoideum (Social amoeba).